The primary structure comprises 86 residues: Neurotoxin-like protein pMD18-NTL1/2/4/5 (86 aa).

Positions 1–21 are cleaved as a signal peptide; sequence MKTLLLTLVVLTIACLDLGYT. Cystine bridges form between Cys24–Cys45, Cys38–Cys62, Cys66–Cys78, and Cys79–Cys84.

Belongs to the three-finger toxin family. Short-chain subfamily. Orphan group IX sub-subfamily. Expressed by the venom gland.

The protein resides in the secreted. This chain is Neurotoxin-like protein pMD18-NTL1/2/4/5, found in Bungarus multicinctus (Many-banded krait).